The sequence spans 726 residues: Dipeptidyl-peptidase 5 (726 aa).

The signal sequence occupies residues 1–19 (MAAAKWLIASLAFASSGLA). N-linked (GlcNAc...) asparagine glycosylation is found at Asn-96 and Asn-252. A disordered region spans residues 269–291 (AEPINKRNGPRTPQAIEGASSSP). The active-site Charge relay system is Ser-558. A glycan (N-linked (GlcNAc...) asparagine) is linked at Asn-605. Active-site charge relay system residues include Asp-641 and His-673. Asn-699 is a glycosylation site (N-linked (GlcNAc...) asparagine).

It belongs to the peptidase S9C family.

It localises to the secreted. Its function is as follows. Extracellular dipeptidyl-peptidase which removes N-terminal dipeptides sequentially from polypeptides having unsubstituted N-termini. Contributes to pathogenicity. The sequence is that of Dipeptidyl-peptidase 5 (DPP5) from Trichophyton equinum (Horse ringworm fungus).